A 486-amino-acid polypeptide reads, in one-letter code: Serine/threonine-protein phosphatase 2A 56 kDa regulatory subunit alpha isoform (486 aa).

The residue at position 2 (Ser-2) is an N-acetylserine. The disordered stretch occupies residues 22-52; sequence DGFTRKSVRKAQRQKRSQGSSQFRSQGSQAE. Basic residues predominate over residues 27–37; the sequence is KSVRKAQRQKR. Residues 38–51 show a composition bias toward low complexity; it reads SQGSSQFRSQGSQA. Phosphoserine occurs at positions 41, 42, and 49.

The protein belongs to the phosphatase 2A regulatory subunit B56 family. In terms of assembly, PP2A consists of a common heterodimeric core enzyme, composed of a 36 kDa catalytic subunit (subunit C) and a 65 kDa constant regulatory subunit (PR65 or subunit A), that associates with a variety of regulatory subunits. Proteins that associate with the core dimer include three families of regulatory subunits B (the R2/B/PR55/B55, R3/B''/PR72/PR130/PR59 and R5/B'/B56 families), the 48 kDa variable regulatory subunit, viral proteins, and cell signaling molecules. Interacts with SGO1. Widely expressed with highest levels in thymus and ovary.

It is found in the cytoplasm. The protein localises to the nucleus. The protein resides in the chromosome. It localises to the centromere. Its function is as follows. The B regulatory subunit might modulate substrate selectivity and catalytic activity, and might also direct the localization of the catalytic enzyme to a particular subcellular compartment. The sequence is that of Serine/threonine-protein phosphatase 2A 56 kDa regulatory subunit alpha isoform (Ppp2r5a) from Mus musculus (Mouse).